We begin with the raw amino-acid sequence, 687 residues long: Putative ammonium transporter 3 (687 aa).

Transmembrane regions (helical) follow at residues 39-59, 77-97, 134-154, 162-182, 196-216, 240-260, 272-292, 299-319, 323-343, 352-372, and 404-424; these read AVWI…FGLL, VVDV…FSYG, ASFL…SGAV, SYIL…HWVW, FAGC…ATVF, LGTF…VWGI, AVAT…ISFV, VNFL…ICAV, WHAL…LPLL, VGIV…VGIF, and CTAA…FLIS. Disordered stretches follow at residues 521–544, 549–568, and 592–687; these read RTNA…FNNQ, AVSS…RRTE, and PPEE…NPPV. The span at 549–564 shows a compositional bias: polar residues; that stretch reads AVSSTVSTARNGPSTG. Composition is skewed to low complexity over residues 614–632 and 648–665; these read SPSS…SPSI and STAS…KNST.

It belongs to the ammonia transporter channel (TC 1.A.11.2) family.

Its subcellular location is the membrane. Functionally, involved in the uptake of ammonia. The protein is Putative ammonium transporter 3 (amt-3) of Caenorhabditis elegans.